We begin with the raw amino-acid sequence, 482 residues long: MWIKSVCLFATIAGCLGQRGGPYKVPDAKLEAIYPKGLRVSVPDDGYSLFAFHGKLNEEMEGLEAGHWSRDITKAKQGRWIFRDRNAELKLGDKIYFWTYVIKDGLGYRQDNGEWTVTEFVNENGTVVDTSTAPPPVAPAVSEEDQSPGPQWRPCERSLTESLARERVCKGSLVFSEDFDGSSLADLGNWTAEVRFPGEPDYPYNLYTTDGTVGFESGSLVVRPVMTESKYHEGIIYDRLDLERCTGQLGTLECRRESSGGQIVPPVMTAKLATRRSFAFKFGRIDIKAKMPRGDWLIPELNLEPLDNIYGNQRYASGLMRVAFVRGNDVYAKKLYGGPIMSDADPFRSMLLKDKQGLANWNNDYHVYSLLWKPNGLELMVDGEVYGTIDAGDGFYQIAKNNLVSHASQWLKGTVMAPFDEKFFITLGLRVAGIHDFTDGPGKPWENKGTKAMINFWNNRFRWFPTWHDTSLKVDYVRVYAL.

An N-terminal signal peptide occupies residues 1–18; the sequence is MWIKSVCLFATIAGCLGQ. Residues 23–122 enclose the CBM39 domain; it reads YKVPDAKLEA…GEWTVTEFVN (100 aa). The N-linked (GlcNAc...) asparagine glycan is linked to Asn124. The disordered stretch occupies residues 127–153; that stretch reads VVDTSTAPPPVAPAVSEEDQSPGPQWR. A GH16 domain is found at 128 to 482; it reads VDTSTAPPPV…KVDYVRVYAL (355 aa). Asn189 carries an N-linked (GlcNAc...) asparagine glycan.

In terms of assembly, monomer. Post-translationally, N-glycosylated. In terms of tissue distribution, cuticle and fat body.

Its subcellular location is the secreted. Its function is as follows. Involved in the recognition of invading microorganisms. Binds specifically to beta-1,3-glucan and lipoteichoic acid and causes aggregation of invading microorganisms. Binding to beta-1,3-glucan activates the phenoloxidase cascade. This is Beta-1,3-glucan-binding protein 2 from Manduca sexta (Tobacco hawkmoth).